We begin with the raw amino-acid sequence, 27 residues long: CD59 glycoprotein (27 aa).

Intrachain disulfides connect cysteine 3-cysteine 25 and cysteine 6-cysteine 12. Asparagine 17 carries N-linked (GlcNAc...) asparagine glycosylation.

In terms of assembly, interacts with T-cell surface antigen CD2. In terms of processing, N- and O-glycosylated. As to expression, expressed in erythrocytes and lymphocytes. Not detected in platelets.

The protein localises to the cell membrane. It localises to the secreted. Its function is as follows. Potent inhibitor of the complement membrane attack complex (MAC) action, which protects self-cells from damage during complement activation. Acts by binding to the beta-haipins of C8 (C8A and C8B) components of the assembling MAC, forming an intermolecular beta-sheet that prevents incorporation of the multiple copies of C9 required for complete formation of the osmolytic pore. This is CD59 glycoprotein from Ovis aries (Sheep).